The sequence spans 203 residues: MGVDKIKSKILDDAKAEANKIISEAEAEKAKILEKAKEEAEKRKAEILKKGEKEAEMTKSRIISEAKLEAKKKLLEAKEEIIEMAINKLKEELVKLPEQPEYKDKLIKLIKDGAISLGGGELIVRLNKRDMELIDDSTLWNLEKEVENATKKVTVLKKGEPVDIAGGCIIETADGLKSLDNSLEAIFNRNLNVIRARITEKLF.

This sequence belongs to the V-ATPase E subunit family. In terms of assembly, might form a homodimer. Interacts with subunit H via residues 41-60. The A-type ATPase is composed of subunits A(3), B(3), C, D, E(1 or 2), F, H(2), I and K(x).

It localises to the cell membrane. Functionally, component of the A-type ATP synthase that produces ATP from ADP in the presence of a proton gradient across the membrane. The protein is A-type ATP synthase subunit E of Methanocaldococcus jannaschii (strain ATCC 43067 / DSM 2661 / JAL-1 / JCM 10045 / NBRC 100440) (Methanococcus jannaschii).